Reading from the N-terminus, the 373-residue chain is MPGWSCLVTGAGGFVGQRIIRMLVQEKELQEVRALDKVFRPETKEEFSKLQTKAKVTMLEGDILDAQYLRRACQGISVVIHTAAVIDVSHVLPRQTILDVNLKGTQNILEACVEASVPAFIYCSTVDVAGPNSYKKIILNGHEEEHHESTWSDAYPYSKRMAEKAVLAANGSILKNGGTLHTCALRPMYIYGERSPFLSVMILAALKNKGILNVTGKFSIANPVYVGNVAWAHILAARGLRDPKKSQNVQGQFYYISDDTPHQSYDDLNCTLSKEWGLRLDSSWSLPLPLLYWLAFLLETVSFLLRPFYNYRPPFNCHLVTLSNSKFTFSYKKAQRDLGYVPLVSWEEAKQKTSEWIGTLVEQHRETLDTKSQ.

NADP(+)-binding positions include 10-15, tyrosine 155, and lysine 159; that span reads GAGGFV. Lysine 159 (proton donor) is an active-site residue. The chain crosses the membrane as a helical span at residues 288–308; the sequence is LPLLYWLAFLLETVSFLLRPF.

It belongs to the 3-beta-HSD family. As to expression, adrenal glands, kidney, testes and ovaries.

It is found in the endoplasmic reticulum membrane. Its subcellular location is the mitochondrion membrane. It carries out the reaction a 3beta-hydroxy-Delta(5)-steroid + NAD(+) = a 3-oxo-Delta(5)-steroid + NADH + H(+). The enzyme catalyses pregnenolone + NAD(+) = pregn-5-ene-3,20-dione + NADH + H(+). The catalysed reaction is 3beta-hydroxyandrost-5-en-17-one + NAD(+) = androst-5-ene-3,17-dione + NADH + H(+). It catalyses the reaction androst-5-en-3beta,17beta-diol + NAD(+) = 17beta-hydroxy-androst-5-en-3-one + NADH + H(+). It carries out the reaction a 3beta-hydroxysteroid + NADP(+) = a 3-oxosteroid + NADPH + H(+). The enzyme catalyses 5alpha-androstane-3beta,17beta-diol + NADP(+) = 17beta-hydroxy-5alpha-androstan-3-one + NADPH + H(+). The catalysed reaction is 3beta-hydroxy-5alpha-androstan-17-one + NADP(+) = 5alpha-androstan-3,17-dione + NADPH + H(+). It catalyses the reaction a 3-oxo-Delta(5)-steroid = a 3-oxo-Delta(4)-steroid. It carries out the reaction pregn-5-ene-3,20-dione = progesterone. The enzyme catalyses androst-5-ene-3,17-dione = androst-4-ene-3,17-dione. The catalysed reaction is 17beta-hydroxy-androst-5-en-3-one = testosterone. It catalyses the reaction 5alpha-androstane-3beta,17beta-diol + NAD(+) = 17beta-hydroxy-5alpha-androstan-3-one + NADH + H(+). It participates in steroid hormone biosynthesis. Its pathway is steroid metabolism. A bifunctional enzyme responsible for the oxidation and isomerization of 3beta-hydroxy-Delta(5)-steroid precursors to 3-oxo-Delta(4)-steroids, an essential step in steroid hormone biosynthesis. Specifically catalyzes the conversion of pregnenolone to progesterone, dehydroepiandrosterone (DHEA) to 4-androstenedione, and androstenediol to testosterone. Additionally, catalyzes the interconversion between 3beta-hydroxy and 3-oxo-5alpha-androstane steroids controlling the bioavalability of the active forms. Specifically converts dihydrotestosterone to its inactive form 5alpha-androstanediol, that does not bind androgen receptor/AR. Also converts androstanedione, a precursor of testosterone and estrone, to epiandrosterone. Expected to use NAD(+) as preferred electron donor for the 3beta-hydroxy-steroid dehydrogenase activity and NADPH for the 3-ketosteroid reductase activity. In Rattus norvegicus (Rat), this protein is 3 beta-hydroxysteroid dehydrogenase/Delta 5--&gt;4-isomerase type 1.